The following is a 341-amino-acid chain: Trimethylamine N-oxide transport system ATP-binding protein TmoW (341 aa).

The ABC transporter domain occupies isoleucine 6–threonine 265. Glycine 61–serine 68 is a binding site for ATP.

It belongs to the ABC transporter superfamily. The complex is probably composed of two ATP-binding proteins (TmoW), two transmembrane proteins (TmoV) and a solute-binding protein (TmoX).

The protein resides in the cell inner membrane. The enzyme catalyses a quaternary ammonium(out) + ATP + H2O = a quaternary ammonium(in) + ADP + phosphate + H(+). Part of the ABC transporter complex TmoXWV involved in trimethylamine N-oxide (TMAO) import. Responsible for energy coupling to the transport system. The chain is Trimethylamine N-oxide transport system ATP-binding protein TmoW from Pelagibacter ubique (strain HTCC1062).